Consider the following 201-residue polypeptide: Recombination protein RecR (201 aa).

The C4-type zinc-finger motif lies at 60–75 (CSCCGNVDTSDPCTIC). A Toprim domain is found at 83-178 (ATLIVVEDVS…RVTRLAHGVP (96 aa)).

It belongs to the RecR family.

Functionally, may play a role in DNA repair. It seems to be involved in an RecBC-independent recombinational process of DNA repair. It may act with RecF and RecO. The polypeptide is Recombination protein RecR (Brucella melitensis biotype 1 (strain ATCC 23456 / CCUG 17765 / NCTC 10094 / 16M)).